The chain runs to 231 residues: MAKKGKKYADALKLVDRDTAYQAEEALELVKKTSVAKFDETVEVAVRLGVDPKKADQQIRGAVVLPHGTGKTQRVLVFAKGEKAKEAEAAGADYVGEDDLINKINQGWFDFDVIVATPDMMAQVGRLGRVLGPKGLMPNPKTGTVTFDVTKAVEEIKAGKVEYRVDKSGNIHVPIGKVSFDTPKLLENFQTIVETLHKVKPAAAKGTYVKNIAVASTMGPGIRVTTTAFAK.

The protein belongs to the universal ribosomal protein uL1 family. Part of the 50S ribosomal subunit.

Its function is as follows. Binds directly to 23S rRNA. The L1 stalk is quite mobile in the ribosome, and is involved in E site tRNA release. Protein L1 is also a translational repressor protein, it controls the translation of the L11 operon by binding to its mRNA. This Shouchella clausii (strain KSM-K16) (Alkalihalobacillus clausii) protein is Large ribosomal subunit protein uL1.